Here is a 402-residue protein sequence, read N- to C-terminus: MKRLWQHCHAATLRNGKYSIVEDAVLVTDGPLIHWIGPRAELPPGDYAERIDLGGAWLTPGLIDCHTHAVFGGNRSGEFEQRLEGVSYAEIATAGGGIASTVRATREASEEELLASARKRLDPLLRDGVTALEIKSGYGLDLASEAKMLRVIRRLGEQLPATVRSTCLAAHALPPEYAGRADDYIGHVCTTILPALAKEGLVDAVDAFCEHLAFSPAQVERVFIAARELGLPVKLHAEQLSSLHGSSLAARYQALSADHLEYMTEEDARAMGAAGTVAVLLPGAFYLLRETRLPPIDALRRHGVAMAVASDLNPGTSPALSLRLMLNMACTLFRLTPEEALAGVTLHAARALGLEASHGSLEAGKLADFVAWEIERPAELAYWLGGDLPKRVIRHAEEVYRG.

H66 and H68 together coordinate Fe(3+). Positions 66 and 68 each coordinate Zn(2+). R75, Y138, and H171 together coordinate 4-imidazolone-5-propanoate. Y138 serves as a coordination point for N-formimidoyl-L-glutamate. Fe(3+) is bound at residue H236. Residue H236 coordinates Zn(2+). Residue Q239 participates in 4-imidazolone-5-propanoate binding. D311 contacts Fe(3+). D311 provides a ligand contact to Zn(2+). N-formimidoyl-L-glutamate contacts are provided by N313 and G315. T316 serves as a coordination point for 4-imidazolone-5-propanoate.

Belongs to the metallo-dependent hydrolases superfamily. HutI family. Zn(2+) is required as a cofactor. Fe(3+) serves as cofactor.

Its subcellular location is the cytoplasm. The catalysed reaction is 4-imidazolone-5-propanoate + H2O = N-formimidoyl-L-glutamate. Its pathway is amino-acid degradation; L-histidine degradation into L-glutamate; N-formimidoyl-L-glutamate from L-histidine: step 3/3. In terms of biological role, catalyzes the hydrolytic cleavage of the carbon-nitrogen bond in imidazolone-5-propanoate to yield N-formimidoyl-L-glutamate. It is the third step in the universal histidine degradation pathway. The protein is Imidazolonepropionase of Pseudomonas paraeruginosa (strain DSM 24068 / PA7) (Pseudomonas aeruginosa (strain PA7)).